We begin with the raw amino-acid sequence, 249 residues long: Protein YIPF4 (249 aa).

Positions 1–15 (MQPPGPQQPPPPPLF) are enriched in pro residues. The tract at residues 1–40 (MQPPGPQQPPPPPLFTPNNGDFTFVSSADAEDPSGSITTP) is disordered. The Cytoplasmic portion of the chain corresponds to 1 to 116 (MQPPGPQQPP…LGFNRQVVRD (116 aa)). The segment covering 16–26 (TPNNGDFTFVS) has biased composition (polar residues). The chain crosses the membrane as a helical span at residues 117–137 (NPDFWGPLAVVLFFSMISLYG). A topological domain (lumenal) is located at residue Gln138. The helical transmembrane segment at 139-159 (FKVVSWIITIWIFGSLTIFLL) threads the bilayer. Residues 160 to 171 (ARVLGGEVAYGQ) lie on the Cytoplasmic side of the membrane. A helical membrane pass occupies residues 172–192 (VLGVIGYSLLPLIVIAPVLLV). Topologically, residues 193–200 (VGSFEVVS) are lumenal. Residues 201 to 221 (TLIKLFGVFWAAYSAASLLVG) form a helical membrane-spanning segment. The Cytoplasmic segment spans residues 222 to 228 (EEFKTKK). Residues 229–249 (PLLIYPIFLLYIYFLSLYTGV) traverse the membrane as a helical segment.

The protein belongs to the YIP1 family.

The protein resides in the golgi apparatus. The protein localises to the cis-Golgi network membrane. Functionally, involved in the maintenance of the Golgi structure. In Gallus gallus (Chicken), this protein is Protein YIPF4 (YIPF4).